Consider the following 525-residue polypeptide: Chromosomal replication initiator protein DnaA (525 aa).

Residues 1–71 are domain I, interacts with DnaA modulators; the sequence is MNDFWQHCSA…SDLAREFWNT (71 aa). The interval 71-188 is domain II; that stretch reads TPIEVQFVLD…GEADSMYERS (118 aa). A disordered region spans residues 162-182; it reads AGRRTWRPGPGAAPANGGEAD. Residues 169–181 show a composition bias toward low complexity; the sequence is PGPGAAPANGGEA. Positions 189 to 405 are domain III, AAA+ region; the sequence is KLNPVLTFDN…GALRKILAYS (217 aa). The ATP site is built by Gly233, Gly235, Lys236, and Thr237. Residues 406–525 form a domain IV, binds dsDNA region; that stretch reads KFHGREISIE…LHVLEQTLKG (120 aa).

Belongs to the DnaA family. As to quaternary structure, oligomerizes as a right-handed, spiral filament on DNA at oriC.

Its subcellular location is the cytoplasm. Functionally, plays an essential role in the initiation and regulation of chromosomal replication. ATP-DnaA binds to the origin of replication (oriC) to initiate formation of the DNA replication initiation complex once per cell cycle. Binds the DnaA box (a 9 base pair repeat at the origin) and separates the double-stranded (ds)DNA. Forms a right-handed helical filament on oriC DNA; dsDNA binds to the exterior of the filament while single-stranded (ss)DNA is stabiized in the filament's interior. The ATP-DnaA-oriC complex binds and stabilizes one strand of the AT-rich DNA unwinding element (DUE), permitting loading of DNA polymerase. After initiation quickly degrades to an ADP-DnaA complex that is not apt for DNA replication. Binds acidic phospholipids. The chain is Chromosomal replication initiator protein DnaA from Burkholderia cenocepacia (strain HI2424).